The chain runs to 125 residues: uncharacterized protein (125 aa).

The next 2 membrane-spanning stretches (helical) occupy residues 22 to 44 (TPLM…NAAV) and 54 to 73 (YMGI…SVLM).

It belongs to the bacteriophage holin family. Cp-1 holin subfamily.

Its subcellular location is the cell membrane. This is an uncharacterized protein from Clostridium acetobutylicum (strain ATCC 824 / DSM 792 / JCM 1419 / IAM 19013 / LMG 5710 / NBRC 13948 / NRRL B-527 / VKM B-1787 / 2291 / W).